The sequence spans 1188 residues: uncharacterized protein (1188 aa).

The next 3 membrane-spanning stretches (helical) occupy residues 73–93 (FVVN…HLLM), 878–898 (IFSV…DSGI), and 1089–1109 (VIPL…SEFI).

The protein resides in the membrane. This is an uncharacterized protein from Saccharomyces cerevisiae (strain ATCC 204508 / S288c) (Baker's yeast).